We begin with the raw amino-acid sequence, 309 residues long: 1,2-phenylacetyl-CoA epoxidase, subunit A (309 aa).

Substrate is bound by residues R33, Q37, 103 to 106, N132, M193, 202 to 204, K214, and N218; these read KYSS and SPN.

Forms a stable heterotetramer (dimer of heterodimers) with PaaC. Fe cation serves as cofactor.

The catalysed reaction is phenylacetyl-CoA + NADPH + O2 + H(+) = 2-(1,2-epoxy-1,2-dihydrophenyl)acetyl-CoA + NADP(+) + H2O. It functions in the pathway aromatic compound metabolism; phenylacetate degradation. Component of 1,2-phenylacetyl-CoA epoxidase multicomponent enzyme system which catalyzes the reduction of phenylacetyl-CoA (PA-CoA) to form 1,2-epoxyphenylacetyl-CoA. The subunit A is the catalytic subunit involved in the incorporation of one atom of molecular oxygen into phenylacetyl-CoA. The chain is 1,2-phenylacetyl-CoA epoxidase, subunit A (paaA) from Escherichia coli (strain K12).